The chain runs to 82 residues: Cytochrome b559 subunit alpha (82 aa).

A helical membrane pass occupies residues 21–35; that stretch reads VIHSVTIPSLFIAGW. H23 provides a ligand contact to heme.

The protein belongs to the PsbE/PsbF family. Heterodimer of an alpha subunit and a beta subunit. PSII is composed of 1 copy each of membrane proteins PsbA, PsbB, PsbC, PsbD, PsbE, PsbF, PsbH, PsbI, PsbJ, PsbK, PsbL, PsbM, PsbT, PsbX, PsbY, PsbZ, Psb30/Ycf12, at least 3 peripheral proteins of the oxygen-evolving complex and a large number of cofactors. It forms dimeric complexes. It depends on heme b as a cofactor.

The protein resides in the plastid. It localises to the chloroplast thylakoid membrane. Its function is as follows. This b-type cytochrome is tightly associated with the reaction center of photosystem II (PSII). PSII is a light-driven water:plastoquinone oxidoreductase that uses light energy to abstract electrons from H(2)O, generating O(2) and a proton gradient subsequently used for ATP formation. It consists of a core antenna complex that captures photons, and an electron transfer chain that converts photonic excitation into a charge separation. In Ostreococcus tauri, this protein is Cytochrome b559 subunit alpha.